Reading from the N-terminus, the 256-residue chain is Small ribosomal subunit protein uS2 (256 aa).

It belongs to the universal ribosomal protein uS2 family.

This Geotalea uraniireducens (strain Rf4) (Geobacter uraniireducens) protein is Small ribosomal subunit protein uS2.